The sequence spans 206 residues: N-(5'-phosphoribosyl)anthranilate isomerase (206 aa).

The protein belongs to the TrpF family.

It catalyses the reaction N-(5-phospho-beta-D-ribosyl)anthranilate = 1-(2-carboxyphenylamino)-1-deoxy-D-ribulose 5-phosphate. It participates in amino-acid biosynthesis; L-tryptophan biosynthesis; L-tryptophan from chorismate: step 3/5. This chain is N-(5'-phosphoribosyl)anthranilate isomerase, found in Pseudomonas putida (strain ATCC 700007 / DSM 6899 / JCM 31910 / BCRC 17059 / LMG 24140 / F1).